The sequence spans 618 residues: Phosphoenolpyruvate carboxykinase [GTP] (618 aa).

Residues R83 and 217–219 (YGG) contribute to the substrate site. Mn(2+)-binding residues include K226 and H245. Position 267 (S267) interacts with substrate. 268–273 (MCGKTS) contacts GTP. C269 is an active-site residue. Mn(2+) is bound at residue D286. 381-383 (NAR) is a binding site for substrate. GTP-binding residues include R383 and R415.

The protein belongs to the phosphoenolpyruvate carboxykinase [GTP] family. Requires Mn(2+) as cofactor.

The protein localises to the cytoplasm. It carries out the reaction oxaloacetate + GTP = phosphoenolpyruvate + GDP + CO2. Its pathway is carbohydrate biosynthesis; gluconeogenesis. Catalyzes the conversion of oxaloacetate (OAA) to phosphoenolpyruvate (PEP), the rate-limiting step in the metabolic pathway that produces glucose from lactate and other precursors derived from the citric acid cycle. In Pyrococcus abyssi (strain GE5 / Orsay), this protein is Phosphoenolpyruvate carboxykinase [GTP].